The following is a 96-amino-acid chain: ASNSD1 upstream open reading frame protein (96 aa).

Positions 1–10 are enriched in basic and acidic residues; that stretch reads MPSRGTRPED. Residues 1–28 form a disordered region; the sequence is MPSRGTRPEDSSVLIPTDNSTPHKEDLS. Residues 23 to 96 are a coiled coil; sequence HKEDLSSKIK…ENLDKTKIKK (74 aa).

In terms of assembly, component of the PAQosome complex which is responsible for the biogenesis of several protein complexes and which consists of R2TP complex members RUVBL1, RUVBL2, RPAP3 and PIH1D1, URI complex members PFDN2, PFDN6, PDRG1, UXT and URI1 as well as ASDURF, POLR2E and DNAAF10/WDR92.

The protein localises to the cytoplasm. This chain is ASNSD1 upstream open reading frame protein, found in Homo sapiens (Human).